The chain runs to 551 residues: RCC1 and BTB domain-containing protein 2 (551 aa).

6 RCC1 repeats span residues 64–115 (NDEI…VLAT), 117–169 (DGEV…VLTS), 171–222 (GEVF…AVVD), 223–274 (TGEV…VLTD), 276–326 (GQIY…AAKS), and 328–382 (GGHV…TVAE). Positions 394 to 457 (ADLKFLVDGK…LYTDNISLPP (64 aa)) constitute a BTB domain.

The protein localises to the cytoplasmic vesicle. The protein resides in the secretory vesicle. Its subcellular location is the acrosome. The protein is RCC1 and BTB domain-containing protein 2 (Rcbtb2) of Rattus norvegicus (Rat).